The following is a 260-amino-acid chain: Late transcription factor 1 (260 aa).

This sequence belongs to the chordopoxvirinae VLTF-1 family. As to quaternary structure, interacts with the late transcription factors VLTF-2 and VLTF-3. Interacts with the late transcription elongation factor VLTF-4. Interacts with itself.

Associates with RNA polymerase to initiate transcription from late gene promoters. The protein is Late transcription factor 1 (OPG093) of Homo sapiens (Human).